The primary structure comprises 138 residues: Ostreolysin A6 (138 aa).

The protein belongs to the aegerolysin family. As to quaternary structure, monomer.

Has hemolytic activity against bovine erythrocytes at nanomolar concentrations in vitro. Promotes active pleurotolysin B (PlyB)-dependent permeabilization of membranes rich in cholesterol and sphingomyelin. May play an important role in the initial phase of fungal fruiting. The sequence is that of Ostreolysin A6 (OlyA6) from Pleurotus ostreatus (Oyster mushroom).